We begin with the raw amino-acid sequence, 67 residues long: MDDRLNELEIKLAFQEDLLETLNLTVARQQQQLDLLQEQFRALYQQVTSAPSTAAESNPQHEIPPHY.

Residues T48–Q60 show a composition bias toward polar residues. Positions T48 to Y67 are disordered.

This sequence belongs to the SlyX family.

This is Protein SlyX homolog from Cupriavidus pinatubonensis (strain JMP 134 / LMG 1197) (Cupriavidus necator (strain JMP 134)).